We begin with the raw amino-acid sequence, 475 residues long: Ribulose bisphosphate carboxylase large chain (475 aa).

The propeptide occupies 1 to 2; it reads MA. At P3 the chain carries N-acetylproline. K14 bears the N6,N6,N6-trimethyllysine mark. Substrate-binding residues include N123 and T173. The active-site Proton acceptor is K175. Residue K177 participates in substrate binding. Mg(2+) contacts are provided by K201, D203, and E204. Position 201 is an N6-carboxylysine (K201). H294 (proton acceptor) is an active-site residue. Positions 295, 327, and 379 each coordinate substrate.

The protein belongs to the RuBisCO large chain family. Type I subfamily. As to quaternary structure, heterohexadecamer of 8 large chains and 8 small chains; disulfide-linked. The disulfide link is formed within the large subunit homodimers. Requires Mg(2+) as cofactor. In terms of processing, the disulfide bond which can form in the large chain dimeric partners within the hexadecamer appears to be associated with oxidative stress and protein turnover.

It localises to the plastid. The protein localises to the chloroplast. It carries out the reaction 2 (2R)-3-phosphoglycerate + 2 H(+) = D-ribulose 1,5-bisphosphate + CO2 + H2O. The enzyme catalyses D-ribulose 1,5-bisphosphate + O2 = 2-phosphoglycolate + (2R)-3-phosphoglycerate + 2 H(+). Functionally, ruBisCO catalyzes two reactions: the carboxylation of D-ribulose 1,5-bisphosphate, the primary event in carbon dioxide fixation, as well as the oxidative fragmentation of the pentose substrate in the photorespiration process. Both reactions occur simultaneously and in competition at the same active site. This is Ribulose bisphosphate carboxylase large chain from Bryopsis maxima (Green alga).